A 146-amino-acid chain; its full sequence is Hemoglobin subunit beta-1/2 (146 aa).

Val-1 is modified (N-acetylvaline). The 145-residue stretch at 2–146 (HLTGEEKSGL…VANALAHKYH (145 aa)) folds into the Globin domain. Thr-12 bears the Phosphothreonine mark. Lys-59 bears the N6-acetyllysine mark. Heme b is bound at residue His-63. N6-acetyllysine is present on Lys-82. His-92 provides a ligand contact to heme b. The residue at position 93 (Cys-93) is an S-nitrosocysteine. Position 144 is an N6-acetyllysine (Lys-144).

Belongs to the globin family. In terms of assembly, heterotetramer of two alpha chains and two beta chains. Red blood cells.

Functionally, involved in oxygen transport from the lung to the various peripheral tissues. This Physeter macrocephalus (Sperm whale) protein is Hemoglobin subunit beta-1/2 (HBB).